We begin with the raw amino-acid sequence, 644 residues long: 2-isopropylmalate synthase (644 aa).

A disordered region spans residues 1–40 (MTTSESPDAYTESFGAHTIVKPAGPPRVGQPSWNPQRASS). Positions 31-40 (PSWNPQRASS) are enriched in polar residues. One can recognise a Pyruvate carboxyltransferase domain in the interval 72–346 (PLWCAVDLRD…DPQIDFSNID (275 aa)). Residues aspartate 81, histidine 285, histidine 287, and asparagine 321 each contribute to the Mg(2+) site. The regulatory domain stretch occupies residues 491–644 (PVRPLERIRQ…VVSAVNRAAR (154 aa)). The stretch at 575-593 (VTIASPAQPGEAGRHASDP) is one VNTR1 repeat. The interval 581–612 (AQPGEAGRHASDPVTIASPAQPGEAGRHASDP) is disordered. The stretch at 594–612 (VTIASPAQPGEAGRHASDP) is one VNTR2 repeat.

Belongs to the alpha-IPM synthase/homocitrate synthase family. LeuA type 2 subfamily. Homodimer. It depends on Mg(2+) as a cofactor.

It localises to the cytoplasm. The catalysed reaction is 3-methyl-2-oxobutanoate + acetyl-CoA + H2O = (2S)-2-isopropylmalate + CoA + H(+). Its pathway is amino-acid biosynthesis; L-leucine biosynthesis; L-leucine from 3-methyl-2-oxobutanoate: step 1/4. Functionally, catalyzes the condensation of the acetyl group of acetyl-CoA with 3-methyl-2-oxobutanoate (2-ketoisovalerate) to form 3-carboxy-3-hydroxy-4-methylpentanoate (2-isopropylmalate). The polypeptide is 2-isopropylmalate synthase (Mycobacterium tuberculosis (strain CDC 1551 / Oshkosh)).